Reading from the N-terminus, the 717-residue chain is Polyribonucleotide nucleotidyltransferase (717 aa).

The Mg(2+) site is built by Asp496 and Asp502. Residues 563–622 (PRLLTIKIDPDLIGLVIGPGGKTVKGITEQTGTKIDIDDDGTVTISSTDGEQAEKAKRLI) form the KH domain. Residues 632–700 (GEVYLGRVTR…SKGRLNLTRL (69 aa)) enclose the S1 motif domain.

Belongs to the polyribonucleotide nucleotidyltransferase family. It depends on Mg(2+) as a cofactor.

Its subcellular location is the cytoplasm. It catalyses the reaction RNA(n+1) + phosphate = RNA(n) + a ribonucleoside 5'-diphosphate. In terms of biological role, involved in mRNA degradation. Catalyzes the phosphorolysis of single-stranded polyribonucleotides processively in the 3'- to 5'-direction. The sequence is that of Polyribonucleotide nucleotidyltransferase from Microcystis aeruginosa (strain NIES-843 / IAM M-2473).